The following is a 132-amino-acid chain: NAD(P) transhydrogenase subunit alpha part 2 (132 aa).

Transmembrane regions (helical) follow at residues 43–63, 72–92, and 103–123; these read PLVF…YVVW, PLMS…MIAI, and LLGS…FIVT.

In terms of assembly, complex of an alpha and a beta chain; in Rickettsia, the alpha chain seems to be made of two subunits.

The protein resides in the cell inner membrane. The enzyme catalyses NAD(+) + NADPH + H(+)(in) = NADH + NADP(+) + H(+)(out). The transhydrogenation between NADH and NADP is coupled to respiration and ATP hydrolysis and functions as a proton pump across the membrane. The chain is NAD(P) transhydrogenase subunit alpha part 2 (pntAB) from Rickettsia prowazekii (strain Madrid E).